Reading from the N-terminus, the 321-residue chain is Phosphatidylglycerol phospholipase C (321 aa).

Residues 2-251 enclose the GP-PDE domain; the sequence is VEIVGHRAFK…DDPIKARKLC (250 aa). A helical; Anchor for type IV membrane protein membrane pass occupies residues 297–315; that stretch reads WVHIKLCGWSIAYVIFLFL.

It belongs to the glycerophosphoryl diester phosphodiesterase family.

It localises to the mitochondrion membrane. It is found in the lipid droplet. The catalysed reaction is a 1,2-diacyl-sn-glycero-3-phospho-(1'-sn-glycerol) + H2O = sn-glycerol 3-phosphate + a 1,2-diacyl-sn-glycerol + H(+). Its function is as follows. Phosphatidylglycerol phospholipase required for the removal of excess phosphatidylglycerol (PG) via a phospholipase C-type degradation mechanism. The chain is Phosphatidylglycerol phospholipase C (PGC1) from Saccharomyces cerevisiae (strain ATCC 204508 / S288c) (Baker's yeast).